The following is a 578-amino-acid chain: Pentatricopeptide repeat-containing protein At4g22760 (578 aa).

13 PPR repeats span residues 68–102, 103–137, 138–168, 169–203, 204–230, 231–261, 262–292, 293–327, 330–364, 365–395, 396–430, 431–465, and 466–496; these read DSFS…GIPP, SSHA…GLCG, CVYV…IAEK, NTVS…DAVS, WNLI…MPLK, SPAS…MPQK, NGVS…MSKK, DKLV…NSYI, DEIT…GIKI, DDLL…LNKK, DTVS…KIPP, NVVT…NLEP, and SADH…MPMQ. A type E motif region spans residues 501–576; it reads VWGALLLASG…TLGCSWVEGS (76 aa).

The protein belongs to the PPR family. PCMP-E subfamily.

This is Pentatricopeptide repeat-containing protein At4g22760 (PCMP-E6) from Arabidopsis thaliana (Mouse-ear cress).